A 199-amino-acid chain; its full sequence is 7-methyl-GTP pyrophosphatase (199 aa).

The active-site Proton acceptor is Asp-76.

The protein belongs to the Maf family. YceF subfamily. The cofactor is a divalent metal cation.

The protein localises to the cytoplasm. The enzyme catalyses N(7)-methyl-GTP + H2O = N(7)-methyl-GMP + diphosphate + H(+). Nucleoside triphosphate pyrophosphatase that hydrolyzes 7-methyl-GTP (m(7)GTP). May have a dual role in cell division arrest and in preventing the incorporation of modified nucleotides into cellular nucleic acids. The sequence is that of 7-methyl-GTP pyrophosphatase from Rhizobium etli (strain ATCC 51251 / DSM 11541 / JCM 21823 / NBRC 15573 / CFN 42).